A 338-amino-acid chain; its full sequence is MTTLRLLISDSYDPWFNLAVEECIFRQMPATQRVLFLWRNADTVVIGRAQNPWKECNTRRMEEDNVRLARRSSGGGAVFHDLGNTCFTFMAGKPEYDKTISTHIVLAALNSLGVMADASGRNDLVVKTPDGDRKVSGSAYRETKDRGFHHGTLLLNADLSRLANYLNPDKKKLAAKGITSVRSRVANLTELLPGITHEQVCQAVTEAFFAHYGERVDAEVISPDKTPDLPNFAETFARQSSWEWNFGQAPAFSHLLDEHFTWGGVELHFDVEKGVITRAQVFTDSLNPAPLEALAGRLQGCQYRADVLEQACKSLIAEFPAQKGELRELAAWMAQAVR.

In terms of domain architecture, BPL/LPL catalytic spans 29-216; it reads PATQRVLFLW…AFFAHYGERV (188 aa). ATP is bound by residues Arg-71, 76–79, and Lys-134; that span reads GAVF. Lys-134 lines the (R)-lipoate pocket.

Belongs to the LplA family. In terms of assembly, monomer.

It is found in the cytoplasm. The catalysed reaction is L-lysyl-[lipoyl-carrier protein] + (R)-lipoate + ATP = N(6)-[(R)-lipoyl]-L-lysyl-[lipoyl-carrier protein] + AMP + diphosphate + H(+). The protein operates within protein modification; protein lipoylation via exogenous pathway; protein N(6)-(lipoyl)lysine from lipoate: step 1/2. Its pathway is protein modification; protein lipoylation via exogenous pathway; protein N(6)-(lipoyl)lysine from lipoate: step 2/2. Catalyzes both the ATP-dependent activation of exogenously supplied lipoate to lipoyl-AMP and the transfer of the activated lipoyl onto the lipoyl domains of lipoate-dependent enzymes. This is Lipoate-protein ligase A from Salmonella choleraesuis (strain SC-B67).